The sequence spans 806 residues: Leucine--tRNA ligase (806 aa).

Residues 38–48 (PYPSGEIHMGH) carry the 'HIGH' region motif. A 'KMSKS' region motif is present at residues 572–576 (KMSKS). ATP is bound at residue K575.

Belongs to the class-I aminoacyl-tRNA synthetase family.

It is found in the cytoplasm. The enzyme catalyses tRNA(Leu) + L-leucine + ATP = L-leucyl-tRNA(Leu) + AMP + diphosphate. In Helicobacter pylori (strain HPAG1), this protein is Leucine--tRNA ligase.